Consider the following 527-residue polypeptide: D-3-phosphoglycerate dehydrogenase (527 aa).

NAD(+)-binding positions include Arg-149–Val-150, Asp-169, Ala-228–Arg-230, and Asp-254. Arg-230 is an active-site residue. Residue Glu-259 is part of the active site. The active-site Proton donor is the His-278. An NAD(+)-binding site is contributed by His-278–Ala-281. One can recognise an ACT domain in the interval Tyr-453–Leu-527.

This sequence belongs to the D-isomer specific 2-hydroxyacid dehydrogenase family.

It carries out the reaction (2R)-3-phosphoglycerate + NAD(+) = 3-phosphooxypyruvate + NADH + H(+). It participates in amino-acid biosynthesis; L-serine biosynthesis; L-serine from 3-phospho-D-glycerate: step 1/3. The sequence is that of D-3-phosphoglycerate dehydrogenase (serA) from Archaeoglobus fulgidus (strain ATCC 49558 / DSM 4304 / JCM 9628 / NBRC 100126 / VC-16).